We begin with the raw amino-acid sequence, 281 residues long: Putative outer membrane protein BBA52 (281 aa).

The interval 162–281 is disordered; that stretch reads KRISDNQSKL…FFDSLEDQFI (120 aa). Over residues 179–196 the composition is skewed to polar residues; it reads NKSVGSKFSKNSRPSKSP. Acidic residues predominate over residues 219-249; that stretch reads EFLDDPSQESDELEREYQDDELESEDPDDGE. Over residues 250–262 the composition is skewed to basic and acidic residues; sequence REYQDDRESRDDT. Over residues 263–281 the composition is skewed to acidic residues; it reads FNEDQSEDEFFDSLEDQFI.

It localises to the cell outer membrane. The sequence is that of Putative outer membrane protein BBA52 from Borreliella burgdorferi (strain ATCC 35210 / DSM 4680 / CIP 102532 / B31) (Borrelia burgdorferi).